Here is a 246-residue protein sequence, read N- to C-terminus: Probable transcriptional regulatory protein ACP_0521 (246 aa).

This sequence belongs to the TACO1 family.

The protein resides in the cytoplasm. The protein is Probable transcriptional regulatory protein ACP_0521 of Acidobacterium capsulatum (strain ATCC 51196 / DSM 11244 / BCRC 80197 / JCM 7670 / NBRC 15755 / NCIMB 13165 / 161).